Here is a 267-residue protein sequence, read N- to C-terminus: MSNKVHLGHTARKRFGQNFLTDDSIISRIVGAISPDNDHVMVEIGPGLGAITEPVAMSIDKLSVVELDRDLVERLQNHPTLKDKLDIHQGDALQFDFSTLQQAGKKMKVFGNLPYNISTPLMFHLFEFAEIIETMHFMLQKEVVLRLSASPGCKAYGRLTVMAQYYCQVVPVLEVPPHSFTPAPKVDSAVVRLLPYANKPWPCKDVTVLRHLCTTAFNMRRKTLRNNLKQLISDEEFGLLNIDASLRPEQISVEQYVALANLLCDKQ.

Residues asparagine 18, leucine 20, glycine 45, glutamate 66, aspartate 91, and asparagine 112 each contribute to the S-adenosyl-L-methionine site.

The protein belongs to the class I-like SAM-binding methyltransferase superfamily. rRNA adenine N(6)-methyltransferase family. RsmA subfamily.

The protein resides in the cytoplasm. It carries out the reaction adenosine(1518)/adenosine(1519) in 16S rRNA + 4 S-adenosyl-L-methionine = N(6)-dimethyladenosine(1518)/N(6)-dimethyladenosine(1519) in 16S rRNA + 4 S-adenosyl-L-homocysteine + 4 H(+). In terms of biological role, specifically dimethylates two adjacent adenosines (A1518 and A1519) in the loop of a conserved hairpin near the 3'-end of 16S rRNA in the 30S particle. May play a critical role in biogenesis of 30S subunits. The chain is Ribosomal RNA small subunit methyltransferase A from Shewanella denitrificans (strain OS217 / ATCC BAA-1090 / DSM 15013).